The sequence spans 989 residues: Phosphoenolpyruvate carboxylase (989 aa).

Residues His-175 and Lys-630 contribute to the active site.

This sequence belongs to the PEPCase type 1 family. It depends on Mg(2+) as a cofactor.

The catalysed reaction is oxaloacetate + phosphate = phosphoenolpyruvate + hydrogencarbonate. Functionally, forms oxaloacetate, a four-carbon dicarboxylic acid source for the tricarboxylic acid cycle. The chain is Phosphoenolpyruvate carboxylase from Prochlorococcus marinus (strain MIT 9515).